A 196-amino-acid polypeptide reads, in one-letter code: Orotate phosphoribosyltransferase (196 aa).

Residue Glu-117–Ser-125 participates in 5-phospho-alpha-D-ribose 1-diphosphate binding. Thr-121 and Arg-149 together coordinate orotate.

The protein belongs to the purine/pyrimidine phosphoribosyltransferase family. PyrE subfamily. In terms of assembly, homodimer. It depends on Mg(2+) as a cofactor.

It carries out the reaction orotidine 5'-phosphate + diphosphate = orotate + 5-phospho-alpha-D-ribose 1-diphosphate. It participates in pyrimidine metabolism; UMP biosynthesis via de novo pathway; UMP from orotate: step 1/2. Catalyzes the transfer of a ribosyl phosphate group from 5-phosphoribose 1-diphosphate to orotate, leading to the formation of orotidine monophosphate (OMP). This is Orotate phosphoribosyltransferase from Methylobacterium sp. (strain 4-46).